The following is a 61-amino-acid chain: Photosystem II reaction center protein K (61 aa).

A propeptide spanning residues 1-24 (MLNILSFIGICLNSFLYSSSFFVA) is cleaved from the precursor. A helical membrane pass occupies residues 40–60 (MPVIPLFFFLLAFVWQAAVSF).

This sequence belongs to the PsbK family. PSII is composed of 1 copy each of membrane proteins PsbA, PsbB, PsbC, PsbD, PsbE, PsbF, PsbH, PsbI, PsbJ, PsbK, PsbL, PsbM, PsbT, PsbX, PsbY, PsbZ, Psb30/Ycf12, at least 3 peripheral proteins of the oxygen-evolving complex and a large number of cofactors. It forms dimeric complexes.

Its subcellular location is the plastid. It is found in the chloroplast thylakoid membrane. In terms of biological role, one of the components of the core complex of photosystem II (PSII). PSII is a light-driven water:plastoquinone oxidoreductase that uses light energy to abstract electrons from H(2)O, generating O(2) and a proton gradient subsequently used for ATP formation. It consists of a core antenna complex that captures photons, and an electron transfer chain that converts photonic excitation into a charge separation. The sequence is that of Photosystem II reaction center protein K from Cucumis sativus (Cucumber).